Reading from the N-terminus, the 155-residue chain is SsrA-binding protein (155 aa).

Basic and acidic residues predominate over residues 135–147; sequence TIKRRDQERDIKK. The segment at 135–155 is disordered; it reads TIKRRDQERDIKKQMKHYNAR.

The protein belongs to the SmpB family.

It localises to the cytoplasm. Required for rescue of stalled ribosomes mediated by trans-translation. Binds to transfer-messenger RNA (tmRNA), required for stable association of tmRNA with ribosomes. tmRNA and SmpB together mimic tRNA shape, replacing the anticodon stem-loop with SmpB. tmRNA is encoded by the ssrA gene; the 2 termini fold to resemble tRNA(Ala) and it encodes a 'tag peptide', a short internal open reading frame. During trans-translation Ala-aminoacylated tmRNA acts like a tRNA, entering the A-site of stalled ribosomes, displacing the stalled mRNA. The ribosome then switches to translate the ORF on the tmRNA; the nascent peptide is terminated with the 'tag peptide' encoded by the tmRNA and targeted for degradation. The ribosome is freed to recommence translation, which seems to be the essential function of trans-translation. This is SsrA-binding protein from Streptococcus pyogenes serotype M6 (strain ATCC BAA-946 / MGAS10394).